The sequence spans 346 residues: UDP-3-O-acylglucosamine N-acyltransferase (346 aa).

His253 (proton acceptor) is an active-site residue.

Belongs to the transferase hexapeptide repeat family. LpxD subfamily. Homotrimer.

It catalyses the reaction a UDP-3-O-[(3R)-3-hydroxyacyl]-alpha-D-glucosamine + a (3R)-hydroxyacyl-[ACP] = a UDP-2-N,3-O-bis[(3R)-3-hydroxyacyl]-alpha-D-glucosamine + holo-[ACP] + H(+). It participates in bacterial outer membrane biogenesis; LPS lipid A biosynthesis. Its function is as follows. Catalyzes the N-acylation of UDP-3-O-acylglucosamine using 3-hydroxyacyl-ACP as the acyl donor. Is involved in the biosynthesis of lipid A, a phosphorylated glycolipid that anchors the lipopolysaccharide to the outer membrane of the cell. In Rickettsia akari (strain Hartford), this protein is UDP-3-O-acylglucosamine N-acyltransferase.